A 391-amino-acid chain; its full sequence is Apolipoprotein A-IV (391 aa).

Positions 1-20 (MFLKAVVLTVALVAITGTQA) are cleaved as a signal peptide. A run of 13 repeats spans residues 33-54 (DYFTQLSNNAKEAVEQLQKTDV), 60-81 (TLFQDKLGNINTYADDLQNKLV), 82-103 (PFAVQLSGHLTKETERVREEIQ), 115-136 (PHANKVSQMFGDNVQKLQEHLR), 137-158 (PYATDLQAQINAQTQDMKRQLT), 159-180 (PYIQRMQTTIQDNVENLQSSMV), 181-202 (PFANELKEKFNQNMEGLKGQLT), 203-224 (PRANELKATIDQNLEDLRSRLA), 225-246 (PLAEGVQEKLNHQMEGLAFQMK), 247-268 (KNAEELQTKVSTNIDQLQKNLA), 269-286 (PLVEDVQSKLKGNTEGLQ), 287-308 (KSLEDLNKQLDQQVEVFRRAVE), and 309-330 (PLGDKFNMALVQQMEKFRQQLG). Residues 33 to 330 (DYFTQLSNNA…QMEKFRQQLG (298 aa)) are 13 X 22 AA approximate tandem repeats. Ser-333 is modified (phosphoserine). Positions 354–391 (FMSTLQKKGSPDQPLALPLPEQVQEQVQEQVQPKPLES) are disordered. Residues 371-391 (PLPEQVQEQVQEQVQPKPLES) are compositionally biased toward low complexity.

Belongs to the apolipoprotein A1/A4/E family. Homodimer. In terms of tissue distribution, secreted in plasma.

It is found in the secreted. Functionally, may have a role in chylomicrons and VLDL secretion and catabolism. Required for efficient activation of lipoprotein lipase by ApoC-II; potent activator of LCAT. Apoa-IV is a major component of HDL and chylomicrons. This chain is Apolipoprotein A-IV (Apoa4), found in Rattus norvegicus (Rat).